A 1759-amino-acid polypeptide reads, in one-letter code: Protein TIC 214 (1759 aa).

Helical transmembrane passes span 23–45, 64–84, 129–149, 172–192, and 221–241; these read VVVG…LFLL, FITG…HLAL, IFFQ…SSIF, IGWI…LICI, and IFVV…PPPF.

Belongs to the TIC214 family. In terms of assembly, part of the Tic complex.

It is found in the plastid. The protein resides in the chloroplast inner membrane. Its function is as follows. Involved in protein precursor import into chloroplasts. May be part of an intermediate translocation complex acting as a protein-conducting channel at the inner envelope. In Phaseolus vulgaris (Kidney bean), this protein is Protein TIC 214.